The primary structure comprises 239 residues: Xyloglucan-specific endo-beta-1,4-glucanase A (239 aa).

The first 14 residues, 1–14 (MKLLALSLASLASA), serve as a signal peptide directing secretion. Asparagine 172 carries an N-linked (GlcNAc...) asparagine glycan.

This sequence belongs to the glycosyl hydrolase 12 (cellulase H) family.

The protein resides in the secreted. It carries out the reaction xyloglucan + H2O = xyloglucan oligosaccharides.. In terms of biological role, catalyzes endohydrolysis of 1,4-beta-D-glucosidic linkages in xyloglucan with retention of the beta-configuration of the glycosyl residues. Specific for xyloglucan and does not hydrolyze other cell wall components. Active against tamarind xyloglucan. The polypeptide is Xyloglucan-specific endo-beta-1,4-glucanase A (xgeA) (Emericella nidulans (strain FGSC A4 / ATCC 38163 / CBS 112.46 / NRRL 194 / M139) (Aspergillus nidulans)).